A 359-amino-acid chain; its full sequence is Phospho-N-acetylmuramoyl-pentapeptide-transferase (359 aa).

At 1-25 (MLYQLALLLKDYWFAFNVLKYITFR) the chain is on the periplasmic side. The chain crosses the membrane as a helical span at residues 26–48 (SFTAVLIAFFLTLVLSPSFINRL). The Cytoplasmic segment spans residues 49–74 (RKIQRLFGGYVREYTPESHEVKKYTP). Lys70 and Thr75 together coordinate muraymycin D2. A helical transmembrane segment spans residues 75-92 (TMGGIVILIVVTLSTLLL). Topologically, residues 93–98 (MRWDIK) are periplasmic. Residues 99 to 120 (YTWVVLLSFLSFGTIGFWDDYV) traverse the membrane as a helical segment. At 121–130 (KLKNKKGISI) the chain is on the cytoplasmic side. A helical membrane pass occupies residues 131–152 (KTKFLLQVLSASLISVLIYYWA). The Periplasmic segment spans residues 153 to 172 (DIDTILYFPFFKELYVDLGV). Residues 173-194 (LYLPFAVFVIVGSANAVNLTDG) traverse the membrane as a helical segment. Muraymycin D2 contacts are provided by Asn190, Asp193, and Asp196. The Cytoplasmic segment spans residues 195–197 (LDG). Residues 198 to 218 (LAIGPAMTTATALGVVAYAVG) traverse the membrane as a helical segment. Residues 219–233 (HSKIAQYLNIPYVPY) are Periplasmic-facing. A helical membrane pass occupies residues 234–255 (AGELTVFCFALVGAGLGFLWFN). Topologically, residues 256-264 (SFPAQMFMG) are cytoplasmic. Muraymycin D2 contacts are provided by Gly264 and Ser268. A helical transmembrane segment spans residues 265–280 (DVGSLSIGASLATVAL). Residues 281-284 (LTKS) are Periplasmic-facing. A helical transmembrane segment spans residues 285–310 (EFIFAVAAGVFVFETISVILQIIYFR). The muraymycin D2 site is built by Gln305 and Ala321. The Cytoplasmic portion of the chain corresponds to 311–332 (WTGGKRLFKRAPFHHHLELNGL). Residues 333-355 (PEPKIVVRMWIISILLAIIAISM) form a helical membrane-spanning segment. The Periplasmic portion of the chain corresponds to 356–359 (LKLR).

Belongs to the glycosyltransferase 4 family. MraY subfamily. As to quaternary structure, homodimer. Mg(2+) serves as cofactor. The cofactor is Mn(2+).

It localises to the cell inner membrane. It carries out the reaction UDP-N-acetyl-alpha-D-muramoyl-L-alanyl-gamma-D-glutamyl-meso-2,6-diaminopimeloyl-D-alanyl-D-alanine + di-trans,octa-cis-undecaprenyl phosphate = di-trans,octa-cis-undecaprenyl diphospho-N-acetyl-alpha-D-muramoyl-L-alanyl-D-glutamyl-meso-2,6-diaminopimeloyl-D-alanyl-D-alanine + UMP. The protein operates within cell wall biogenesis; peptidoglycan biosynthesis. With respect to regulation, inhibited by natural nucleoside antibiotics including tunicamycin, capuramycin and muraymycin. Usually the cofactor magnesium is not required for antibiotic binding. Functionally, catalyzes the initial step of the lipid cycle reactions in the biosynthesis of the cell wall peptidoglycan: transfers peptidoglycan precursor phospho-MurNAc-pentapeptide from UDP-MurNAc-pentapeptide onto the lipid carrier undecaprenyl phosphate, yielding undecaprenyl-pyrophosphoryl-MurNAc-pentapeptide, known as lipid I. The protein is Phospho-N-acetylmuramoyl-pentapeptide-transferase of Aquifex aeolicus (strain VF5).